Consider the following 188-residue polypeptide: Small ribosomal subunit protein uS7 (188 aa).

It belongs to the universal ribosomal protein uS7 family. As to quaternary structure, part of the 30S ribosomal subunit.

Its function is as follows. One of the primary rRNA binding proteins, it binds directly to 16S rRNA where it nucleates assembly of the head domain of the 30S subunit. Is located at the subunit interface close to the decoding center. The protein is Small ribosomal subunit protein uS7 of Methanococcus maripaludis (strain DSM 14266 / JCM 13030 / NBRC 101832 / S2 / LL).